The chain runs to 116 residues: Non-specific lipid-transfer protein 1 (116 aa).

An N-terminal signal peptide occupies residues 1 to 25 (MARAQLVLVALVAALLLAAPHAAVA). Cystine bridges form between C28-C75, C38-C52, C53-C98, and C73-C112.

This sequence belongs to the plant LTP family. Aleurone (external part) of the seeds.

In terms of biological role, plant non-specific lipid-transfer proteins transfer phospholipids as well as galactolipids across membranes. May play a role in wax or cutin deposition in the cell walls of expanding epidermal cells and certain secretory tissues. This chain is Non-specific lipid-transfer protein 1 (LTP), found in Oryza sativa subsp. indica (Rice).